The primary structure comprises 119 residues: Large ribosomal subunit protein bL20 (119 aa).

This sequence belongs to the bacterial ribosomal protein bL20 family.

In terms of biological role, binds directly to 23S ribosomal RNA and is necessary for the in vitro assembly process of the 50S ribosomal subunit. It is not involved in the protein synthesizing functions of that subunit. This Shewanella amazonensis (strain ATCC BAA-1098 / SB2B) protein is Large ribosomal subunit protein bL20.